The primary structure comprises 434 residues: Ribosomal protein uS12 methylthiotransferase RimO (434 aa).

One can recognise an MTTase N-terminal domain in the interval serine 6–lysine 122. [4Fe-4S] cluster-binding residues include cysteine 15, cysteine 51, cysteine 85, cysteine 146, cysteine 150, and cysteine 153. The region spanning leucine 132–alanine 361 is the Radical SAM core domain. A TRAM domain is found at glutamine 364 to leucine 434.

It belongs to the methylthiotransferase family. RimO subfamily. [4Fe-4S] cluster serves as cofactor.

The protein resides in the cytoplasm. It catalyses the reaction L-aspartate(89)-[ribosomal protein uS12]-hydrogen + (sulfur carrier)-SH + AH2 + 2 S-adenosyl-L-methionine = 3-methylsulfanyl-L-aspartate(89)-[ribosomal protein uS12]-hydrogen + (sulfur carrier)-H + 5'-deoxyadenosine + L-methionine + A + S-adenosyl-L-homocysteine + 2 H(+). Functionally, catalyzes the methylthiolation of an aspartic acid residue of ribosomal protein uS12. The polypeptide is Ribosomal protein uS12 methylthiotransferase RimO (Chloroherpeton thalassium (strain ATCC 35110 / GB-78)).